The sequence spans 81 residues: Large ribosomal subunit protein bL31 (81 aa).

Residues Cys16, Cys18, Cys36, and Cys39 each contribute to the Zn(2+) site.

It belongs to the bacterial ribosomal protein bL31 family. Type A subfamily. In terms of assembly, part of the 50S ribosomal subunit. The cofactor is Zn(2+).

In terms of biological role, binds the 23S rRNA. This is Large ribosomal subunit protein bL31 from Rhodopirellula baltica (strain DSM 10527 / NCIMB 13988 / SH1).